Consider the following 207-residue polypeptide: Probable GTP-binding protein EngB (207 aa).

The EngB-type G domain maps to 23-197 (AGIEVVFAGR…ETVIGRWLFA (175 aa)). Residues 31–38 (GRSNAGKS), 58–62 (GRTQL), 76–79 (DLPG), 143–146 (TKAD), and 176–178 (FSS) contribute to the GTP site. Positions 38 and 60 each coordinate Mg(2+).

Belongs to the TRAFAC class TrmE-Era-EngA-EngB-Septin-like GTPase superfamily. EngB GTPase family. The cofactor is Mg(2+).

Its function is as follows. Necessary for normal cell division and for the maintenance of normal septation. This chain is Probable GTP-binding protein EngB, found in Methylobacillus flagellatus (strain ATCC 51484 / DSM 6875 / VKM B-1610 / KT).